A 202-amino-acid polypeptide reads, in one-letter code: Adapter protein MecA 2 (202 aa).

The protein belongs to the MecA family. Homodimer.

In terms of biological role, enables the recognition and targeting of unfolded and aggregated proteins to the ClpC protease or to other proteins involved in proteolysis. Acts negatively in the development of competence by binding ComK and recruiting it to the ClpCP protease. When overexpressed, inhibits sporulation. Also involved in Spx degradation by ClpC. This Bacillus cereus (strain ATCC 14579 / DSM 31 / CCUG 7414 / JCM 2152 / NBRC 15305 / NCIMB 9373 / NCTC 2599 / NRRL B-3711) protein is Adapter protein MecA 2 (mecA2).